We begin with the raw amino-acid sequence, 227 residues long: MNLSFFDQFLSPSLLGIPLIAMAIMIPWLIFPTPTNRWLNNRLMTVQSWFINRFTYQLMQPMNFGGHKWATILTALMLFLITINLLGLLPYTFTPTTQLSLNMAFAIPLWLTTVLIGMLNQPTVALGHLLPEGTPTLLIPILIIIETISLFIRPLALGVRLTANLTAGHLLMQLIATAAFVLITIMPTVALLTSLILFLLTILEVAVAMIQAYVFVLLLSLYLQENV.

Transmembrane regions (helical) follow at residues 14-34 (LLGIPLIAMAIMIPWLIFPTP), 69-89 (WATILTALMLFLITINLLGLL), 99-119 (LSLNMAFAIPLWLTTVLIGML), 137-157 (LLIPILIIIETISLFIRPLAL), 180-200 (FVLITIMPTVALLTSLILFLL), and 202-222 (ILEVAVAMIQAYVFVLLLSLY).

The protein belongs to the ATPase A chain family. In terms of assembly, component of the ATP synthase complex composed at least of ATP5F1A/subunit alpha, ATP5F1B/subunit beta, ATP5MC1/subunit c (homooctomer), MT-ATP6/subunit a, MT-ATP8/subunit 8, ATP5ME/subunit e, ATP5MF/subunit f, ATP5MG/subunit g, ATP5MK/subunit k, ATP5MJ/subunit j, ATP5F1C/subunit gamma, ATP5F1D/subunit delta, ATP5F1E/subunit epsilon, ATP5PF/subunit F6, ATP5PB/subunit b, ATP5PD/subunit d, ATP5PO/subunit OSCP. ATP synthase complex consists of a soluble F(1) head domain (subunits alpha(3) and beta(3)) - the catalytic core - and a membrane F(0) domain - the membrane proton channel (subunits c, a, 8, e, f, g, k and j). These two domains are linked by a central stalk (subunits gamma, delta, and epsilon) rotating inside the F1 region and a stationary peripheral stalk (subunits F6, b, d, and OSCP). Interacts with DNAJC30; interaction is direct.

The protein resides in the mitochondrion inner membrane. The enzyme catalyses H(+)(in) = H(+)(out). Subunit a, of the mitochondrial membrane ATP synthase complex (F(1)F(0) ATP synthase or Complex V) that produces ATP from ADP in the presence of a proton gradient across the membrane which is generated by electron transport complexes of the respiratory chain. ATP synthase complex consist of a soluble F(1) head domain - the catalytic core - and a membrane F(1) domain - the membrane proton channel. These two domains are linked by a central stalk rotating inside the F(1) region and a stationary peripheral stalk. During catalysis, ATP synthesis in the catalytic domain of F(1) is coupled via a rotary mechanism of the central stalk subunits to proton translocation. With the subunit c (ATP5MC1), forms the proton-conducting channel in the F(0) domain, that contains two crucial half-channels (inlet and outlet) that facilitate proton movement from the mitochondrial intermembrane space (IMS) into the matrix. Protons are taken up via the inlet half-channel and released through the outlet half-channel, following a Grotthuss mechanism. The protein is ATP synthase F(0) complex subunit a of Squalus acanthias (Spiny dogfish).